A 2310-amino-acid polypeptide reads, in one-letter code: Retinal-specific phospholipid-transporting ATPase ABCA4 (2310 aa).

The Cytoplasmic segment spans residues 1 to 21 (MGFLRQIQLLLWKNWTLRKRQ). A helical membrane pass occupies residues 22–42 (KIRFVVELVWPLSLFLVLIWL). The Extracellular portion of the chain corresponds to 43-646 (RNANPLYSQH…MPYPCFVDDS (604 aa)). Cystine bridges form between Cys54-Cys81 and Cys75-Cys324. Asn98 carries an N-linked (GlcNAc...) asparagine glycan. Positions 336 and 338 each coordinate Mg(2+). Cys370 and Cys519 are disulfide-bonded. Residues Asn415 and Asn504 are each glycosylated (N-linked (GlcNAc...) asparagine). Residues Arg587 and Arg653 each contribute to the an N-all-trans-retinylidenephosphatidylethanolamine site. 3 disulfides stabilise this stretch: Cys641/Cys1489, Cys1443/Cys1454, and Cys1487/Cys1501. A helical membrane pass occupies residues 647–667 (FMIILNRCFPIFMVLAWIYSV). At 668–699 (SMTVKGIVLEKELRLKETLKNQGVSNAVIWCT) the chain is on the cytoplasmic side. Residues 700–720 (WFLDSFSIMALSIFLLTLFIM) traverse the membrane as a helical segment. Residues 721-730 (HGRILHYSDP) are Extracellular-facing. The chain crosses the membrane as a helical span at residues 731 to 751 (FILFLFLLAFATATIMQSFLL). Residues 752–759 (STLFSKAS) lie on the Cytoplasmic side of the membrane. A helical membrane pass occupies residues 760-780 (LAAACSGVIYFTLYLPHVLCF). Topologically, residues 781-835 (AWQDRMTADLKTTVSLLSSVAFGFGTEYLVRFEEQGLGLQWSNIGKSPLEGDEFS) are extracellular. Residues 836–856 (FLLSMKMMLLDAALYGLLAWY) form a helical membrane-spanning segment. Topologically, residues 857–1375 (LDQVFPGDYG…IRSRKDFVAQ (519 aa)) are cytoplasmic. The disordered stretch occupies residues 891-910 (ERALEKTEPLTEEMEDPEHP). Thr901 carries the post-translational modification Phosphothreonine. An ABC transporter 1 domain is found at 929–1160 (VCVKNLVKVF…FGTGFYLTLV (232 aa)). 3 residues coordinate ATP: Phe938, Gly966, and Lys969. Mg(2+) is bound at residue Thr970. Residues Thr971, Gln1010, Lys1054, Gly1064, Gly1065, and His1118 each contribute to the ATP site. At Ser1185 the chain carries Phosphoserine. Residues 1311–1344 (RQYAQAPHTCSPGQVDPPKGQPSPEPEDPGVPFN) are disordered. The helical transmembrane segment at 1376-1396 (IVLPATFVFLALMLSIIVPPF) threads the bilayer. Over 1397 to 1726 (GEFPALTLHP…VSPTTYWLTN (330 aa)) the chain is Extracellular. Asn1468 carries N-linked (GlcNAc...) asparagine glycosylation. 3 N-linked (GlcNAc...) asparagine glycosylation sites follow: Asn1528, Asn1587, and Asn1661. The helical transmembrane segment at 1727–1747 (FLWDIMNYAVSAGLVVGIFIG) threads the bilayer. Over 1748–1758 (FQKKAYTSPDN) the chain is Cytoplasmic. Residues 1759 to 1779 (LPALVSLLMLYGWAVIPMMYP) form a helical membrane-spanning segment. Topologically, residues 1780–1791 (ASFLFEVPSTAY) are extracellular. The chain crosses the membrane as a helical span at residues 1792–1812 (VALSCANLFIGINSSAITFVL). Topologically, residues 1813-1830 (ELFENNRTLLRFNAMLRK) are cytoplasmic. The chain crosses the membrane as a helical span at residues 1831–1851 (LLIVFPHFCLGRGLIDLALSQ). The Extracellular portion of the chain corresponds to 1852-1872 (AVTDVYAQFGEEYSANPFQWD). The chain crosses the membrane as a helical span at residues 1873-1893 (LIGKNLVAMAIEGVVYFLLTL). Over 1894 to 2310 (LIQHHFFLTR…AEDKHTRSPQ (417 aa)) the chain is Cytoplasmic. Residues 1937-2169 (LKLNELTKVY…FGDGYIVTMK (233 aa)) enclose the ABC transporter 2 domain. 6 residues coordinate ATP: Asn1973, Gly1974, Lys1977, Thr1978, Thr1979, and Gly2072. Position 1978 (Thr1978) interacts with Mg(2+). Residues 2243 to 2248 (VFVNFA) form an essential for ATP binding and ATPase activity region. The interval 2266–2310 (ASWQAKLEEKSGRLQTQEPLPAGSEQLANGSNPTAAEDKHTRSPQ) is disordered. Positions 2301–2310 (AEDKHTRSPQ) are enriched in basic and acidic residues.

Belongs to the ABC transporter superfamily. ABCA family. Post-translationally, N-glycosylated. In terms of processing, proteolytic cleavage by trypsin leads to a 120-kDa N-terminal fragment and a 115-kDa C-terminal fragment that are linked through disulfide bonds. Phosphorylation is independent of light exposure and modulates ATPase activity. As to expression, retinal-specific. Seems to be exclusively found in the rims of rod photoreceptor cells.

The protein localises to the membrane. The protein resides in the endoplasmic reticulum. It is found in the cell projection. It localises to the cilium. Its subcellular location is the photoreceptor outer segment. The enzyme catalyses an N-all-trans-retinylidenephosphatidylethanolamine(out) + ATP + H2O = an N-all-trans-retinylidenephosphatidylethanolamine(in) + ADP + phosphate + H(+). It catalyses the reaction ATP + H2O + phospholipidSide 1 = ADP + phosphate + phospholipidSide 2.. The catalysed reaction is a 1,2-diacyl-sn-glycero-3-phosphoethanolamine(out) + ATP + H2O = a 1,2-diacyl-sn-glycero-3-phosphoethanolamine(in) + ADP + phosphate + H(+). It carries out the reaction N-11-cis-retinylidenephosphatidylethanolamine(out) + ATP + H2O = N-11-cis-retinylidenephosphatidylethanolamine(in) + ADP + phosphate + H(+). The enzyme catalyses ATP + H2O = ADP + phosphate + H(+). Its activity is regulated as follows. ATPase activity is decreased by cholesterol and ceramide. Phospholipids translocase activity is highly reduced by berylium fluoride and aluminum floride. N-ethylmaleimide inhibits phospholipid translocase activity. Functionally, flippase that catalyzes in an ATP-dependent manner the transport of retinal-phosphatidylethanolamine conjugates like the 11-cis and all-trans isomers of N-retinylidene-phosphatidylethanolamine from the lumen to the cytoplasmic leaflet of photoreceptor outer segment disk membranes, where N-cis-retinylidene-phosphatidylethanolamine (N-cis-R-PE) is then isomerized to its all-trans isomer (N-trans-R-PE) and reduced by RDH8 to produce all-trans-retinol (all-trans-rol) and therefore prevents the accumulation of excess of 11-cis-retinal and its schiff-base conjugate and the formation of toxic bisretinoid. Displays ATPase activity in vitro in absence of retinal substrate. May display GTPase activity that is strongly influenced by the lipid environment and the presence of retinoid compounds. Binds the unprotonated form of N-retinylidene-phosphatidylethanolamine with high affinity in the absence of ATP and ATP binding and hydrolysis induce a protein conformational change that causes the dissociation of N-retinylidene-phosphatidylethanolamine. This is Retinal-specific phospholipid-transporting ATPase ABCA4 from Mus musculus (Mouse).